The chain runs to 611 residues: Methionine--tRNA ligase (611 aa).

A 'HIGH' region motif is present at residues 12 to 22 (PYANGPRHIGH). The Zn(2+) site is built by Cys-144, Cys-147, Cys-157, and Cys-160. A 'KMSKS' region motif is present at residues 348 to 352 (KFSSS). Ser-351 contributes to the ATP binding site.

This sequence belongs to the class-I aminoacyl-tRNA synthetase family. MetG type 1 subfamily. In terms of assembly, monomer. Zn(2+) serves as cofactor.

The protein localises to the cytoplasm. It carries out the reaction tRNA(Met) + L-methionine + ATP = L-methionyl-tRNA(Met) + AMP + diphosphate. Is required not only for elongation of protein synthesis but also for the initiation of all mRNA translation through initiator tRNA(fMet) aminoacylation. This is Methionine--tRNA ligase from Corynebacterium urealyticum (strain ATCC 43042 / DSM 7109).